Consider the following 350-residue polypeptide: Transcriptional activator hacA (350 aa).

The disordered stretch occupies residues 1–118 (MKSADRFSPV…RLEMEKLESE (118 aa)). A compositionally biased stretch (polar residues) spans 35-47 (PADTSLQTKNVVA). 2 stretches are compositionally biased toward basic and acidic residues: residues 81–95 (KTED…ERVL) and 104–118 (SRER…LESE). The 64-residue stretch at 87-150 (EQRRIERVLR…NRLSQQVAQL (64 aa)) folds into the bZIP domain. Residues 89–142 (RRIERVLRNRAAAQTSRERKRLEMEKLESEKIDMEQQNQFLLQRLAQMEAENNR) form a basic motif region. Residues 143-150 (LSQQVAQL) form a leucine-zipper region. Disordered stretches follow at residues 152–175 (AEVR…PTLT), 194–218 (PTPS…DLTQ), and 328–350 (SLQP…AGSA). The span at 160 to 175 (STPTSSSPASVSPTLT) shows a compositional bias: low complexity. Composition is skewed to polar residues over residues 196–211 (PSVT…SSLA) and 329–340 (LQPSHGASTSRC).

It belongs to the bZIP family. Homodimer.

The protein localises to the nucleus. In terms of biological role, transcriptional activator involved in the unfolded protein response (UPR) pathway. Recognizes and binds to the UPR element (UPRE) in the promoter of UPR-regulated genes. Increases the synthesis of endoplasmic reticulum-resident proteins required for protein folding as well as components of the secretory pathway. This chain is Transcriptional activator hacA (hacA), found in Emericella nidulans (strain FGSC A4 / ATCC 38163 / CBS 112.46 / NRRL 194 / M139) (Aspergillus nidulans).